The chain runs to 2004 residues: Alpha-2-macroglobulin homolog (2004 aa).

A signal peptide spans 1 to 27; sequence MLCCLVFKGLLSMDLLRFLLISPFALI.

Belongs to the protease inhibitor I39 (alpha-2-macroglobulin) family. Bacterial alpha-2-macroglobulin subfamily.

The polypeptide is Alpha-2-macroglobulin homolog (Yersinia pestis).